Consider the following 183-residue polypeptide: Ribose 1,5-bisphosphate phosphokinase PhnN (183 aa).

It belongs to the ribose 1,5-bisphosphokinase family.

The enzyme catalyses alpha-D-ribose 1,5-bisphosphate + ATP = 5-phospho-alpha-D-ribose 1-diphosphate + ADP. The protein operates within metabolic intermediate biosynthesis; 5-phospho-alpha-D-ribose 1-diphosphate biosynthesis; 5-phospho-alpha-D-ribose 1-diphosphate from D-ribose 5-phosphate (route II): step 3/3. In terms of biological role, catalyzes the phosphorylation of ribose 1,5-bisphosphate to 5-phospho-D-ribosyl alpha-1-diphosphate (PRPP). The sequence is that of Ribose 1,5-bisphosphate phosphokinase PhnN from Azotobacter vinelandii (strain DJ / ATCC BAA-1303).